The chain runs to 463 residues: Chromosomal replication initiator protein DnaA (463 aa).

The interval 1-83 is domain I, interacts with DnaA modulators; that stretch reads MSTNQIILTD…LQLFQHYNNT (83 aa). The interval 83–124 is domain II; that stretch reads TIKSIEIITKELPGTTQTVTELPTKTFADIGSSELNSENIFS. The tract at residues 125-343 is domain III, AAA+ region; sequence TLDVRFTFDN…GALNKVIAHS (219 aa). 4 residues coordinate ATP: Gly-171, Gly-173, Lys-174, and Thr-175. The domain IV, binds dsDNA stretch occupies residues 344-463; that stretch reads NFTLKEITLE…IHLLMKILQN (120 aa).

It belongs to the DnaA family. In terms of assembly, oligomerizes as a right-handed, spiral filament on DNA at oriC.

Its subcellular location is the cytoplasm. Plays an essential role in the initiation and regulation of chromosomal replication. ATP-DnaA binds to the origin of replication (oriC) to initiate formation of the DNA replication initiation complex once per cell cycle. Binds the DnaA box (a 9 base pair repeat at the origin) and separates the double-stranded (ds)DNA. Forms a right-handed helical filament on oriC DNA; dsDNA binds to the exterior of the filament while single-stranded (ss)DNA is stabiized in the filament's interior. The ATP-DnaA-oriC complex binds and stabilizes one strand of the AT-rich DNA unwinding element (DUE), permitting loading of DNA polymerase. After initiation quickly degrades to an ADP-DnaA complex that is not apt for DNA replication. Binds acidic phospholipids. This is Chromosomal replication initiator protein DnaA from Rickettsia africae (strain ESF-5).